The chain runs to 468 residues: Glutathione reductase (468 aa).

The FAD site is built by S17 and G18. Glutathione is bound at residue S17. R24 lines the glutathione pocket. Positions 38, 45, 46, and 54 each coordinate FAD. A disulfide bridge links C46 with C51. A glutathione-binding site is contributed by Y103. An FAD-binding site is contributed by A119. Residues A185, I188, E191, R208, R214, and G276 each coordinate NADP(+). Position 317 (D317) interacts with FAD. E323 serves as a coordination point for NADP(+). FAD is bound at residue T325. Residue R333 participates in glutathione binding. NADP(+) is bound at residue V358. A glutathione-binding site is contributed by K410. Residue H457 participates in FAD binding. H457 acts as the Proton acceptor in catalysis.

The protein belongs to the class-I pyridine nucleotide-disulfide oxidoreductase family. Homodimer. The cofactor is FAD.

It localises to the cytoplasm. Its subcellular location is the mitochondrion. It carries out the reaction 2 glutathione + NADP(+) = glutathione disulfide + NADPH + H(+). Functionally, catalyzes the reduction of glutathione disulfide (GSSG) to reduced glutathione (GSH). Constitutes the major mechanism to maintain a high GSH:GSSG ratio in the cytosol. This Neurospora crassa (strain ATCC 24698 / 74-OR23-1A / CBS 708.71 / DSM 1257 / FGSC 987) protein is Glutathione reductase (gtr-1).